We begin with the raw amino-acid sequence, 1907 residues long: MHGSVSGYLLVNAEVDSMGGVIDSGGGIGVKTSPRRTAIEKAQAELRQEYDVREERRRELEFLEKGGNPLDFKFGIATSHSVQSTSLTDQQAEHFVNSEVKDSFALTASPHGDSVESSGRPGVPTISEPNTADNLLLFDSENKSVEGERNLRHPNRQNRTSESERSSKAHTNQNTKETEDSAIFRPYARRNRSKISRDPARSSSTDLVQNRGGLATSISIRRGSVEGKGCIPEAANQKDMHTTSVSCPVFANSNGNIVPKNRVSSNSLNTKVDGEPVVRESTAGSKTSLLKDEADISYSKSSAYLPVGESGLAGEKAQLVSTGGSPKAATIAGQKNSSTQLNGLRDSTVEEESLTNRGATGTNGLESESSHANNVEVNVDNERDLYKVDKLDSDEISMQKTLRVEGLLDQTVGEMTKTKIEDETGQSTTIISECIPECEMQMKSVKIENQSHRSTAEMQTKEKSSETEKRLQDGLVVLENDSKVGSILSENPSSTLCSGIPQASVDTSSCTVGNSLLSGTDIEALKHQPSSDAVMLDTVKEDAILEEARIIQAKKKRIAELSCGTAPVEVREKSQWDFVLEEMAWLANDFAQERLWKMTAATQICHRVALTCQLRFEERNQHRKLKKIASVLSYAILQFWSSVEAEVPGELEETSLGIVKETCQESNCLNGIRCLAAGVKEYASRFLKYNNSSISYHSAALSTPDNMCDPEILDISMVDQLTEASLFYSVPSGAMEVYLKSIESHLTRCEKSGSSMQEEVDTSAYDTAGDIGYNVTAFDEDEGETSTYYLPGAFESSRSFNISHKKRKNLMKSHSARSYDLGDDLPYVNNTGGSNSSSLIVKRPDSNINAGSVPTRRVRTASRHRVVSPFGCATTGNLPVPSKTDASSGDTSSFQDEYSSLHGGSAVQKGTEVESSVNFEKLLPYDMAETSGKPKKKKKTHQGSAYDQTWHLNPSVHVEQKDHWKKRPENNFDMNGLYGPHSAKKQKTTKQLVENNFDMAIPHTGSIPSPAASQMSNMSNPNKSIKFIGGRDRGRKIKGLKISPGQHGSGNPWSLFEDQALVVLVHDMGPNWELISDAMNSTLKIKYIYRNPTECKDRHKILMDKTAGDGADSAEDSGNSQSYPSTLPGIPKGSARQLFQRLQGPMEEDTLKSHFEKICLIGKKLHYRKTQNDGRDPKQIVPVHNSQVMALSQVFPNNLNGGVLTPLDVCDASTSGQDVFSLENPGLPMLNQGTPVLPTSGAHPSTPGSSGVVLSNNLPTTSGLQSASVRDGRFNVPRGSLPLDEQHRLQQFNQTLSGRNLQQPSLSTPAAVSGSDRGHRMVPGGNAMGVSGMNRNTPMSRPGFQGMASAAMPNTGNMHTSGMVGIPNTGNIHSGGGASQGNSMIRPREAVQHMMRMQAAQGNSPGIPAFSNLSSGFTNQTTPVQAYPGHLSQQHQMSPQSHVLGNSHHPHLQSPSQATGAQQEAFAIRQRQIHQRYLQQQQQQFPASGSMMPHVQQPQGSSVSSSSQNSPQTQPPVSPQPLSMPPVSPSPNINAMAQQKPQKSQLALHGLGRSPQSGTSGVNNQAGKQRQRQLQQSARQHPHQRQPTQGQQLNKQLKGMGRGNMIHQNITVDQSHLNGLTMPQGNQATEKGEIAVSVRPDQQSSVGTTTSTDLQSKPFVSPLSSNHSQQLPKSFPGALSPSPQQQMQLHSDNSIQGQSSPATPCNILSTSSLSIAPAVAPSNHQHLLIHQKQRNQVQSTAQRVVQHNHLGNSELSKKSQAECMPRVPQSVTNTTQTASMGTTKGMPQASNDLKNIKAVGSTAVPALEPPSCVASVQSTASKVVNNSNTDSAGNDPVSTPNQGLAQKHGIKGVTQRQQQSLPSEEKRPKLPEKPTVQNQKHLASEEQPHLEEAQELSSSKPPDTKVE.

Disordered stretches follow at residues 108–208 (ASPH…TDLV), 261–287 (NRVS…GSKT), 323–373 (GGSP…SHAN), and 449–469 (NQSH…ETEK). The span at 140–151 (SENKSVEGERNL) shows a compositional bias: basic and acidic residues. Composition is skewed to polar residues over residues 261 to 270 (NRVSSNSLNT), 333 to 342 (GQKNSSTQLN), and 355 to 372 (TNRG…SSHA). The HSA domain maps to 563–641 (CGTAPVEVRE…LSYAILQFWS (79 aa)). 2 disordered regions span residues 836–909 (SSSL…AVQK) and 928–952 (AETS…TWHL). A compositionally biased stretch (basic residues) spans 856-866 (RRVRTASRHRV). Polar residues-rich tracts occupy residues 884 to 898 (TDAS…QDEY) and 942 to 952 (QGSAYDQTWHL). The 57-residue stretch at 1049-1105 (SGNPWSLFEDQALVVLVHDMGPNWELISDAMNSTLKIKYIYRNPTECKDRHKILMDK) folds into the SANT domain. Disordered stretches follow at residues 1107–1131 (AGDG…PGIP), 1235–1266 (PVLP…GLQS), 1296–1319 (LSGR…DRGH), 1429–1465 (GHLS…QQEA), 1477–1594 (YLQQ…QQLN), 1638–1703 (VRPD…SPAT), 1767–1791 (VPQS…QASN), and 1824–1907 (VNNS…TKVE). Composition is skewed to polar residues over residues 1116–1125 (DSGNSQSYPS), 1242–1266 (AHPS…GLQS), 1296–1310 (LSGR…STPA), 1431–1444 (LSQQ…SHVL), and 1453–1462 (QSPSQATGAQ). The segment covering 1493–1512 (PHVQQPQGSSVSSSSQNSPQ) has biased composition (low complexity). The segment covering 1513–1529 (TQPPVSPQPLSMPPVSP) has biased composition (pro residues). 8 stretches are compositionally biased toward polar residues: residues 1532–1545 (NINA…QKSQ), 1554–1568 (SPQS…QAGK), 1585–1594 (RQPTQGQQLN), 1640–1655 (PDQQ…TDLQ), 1662–1672 (PLSSNHSQQLP), 1681–1703 (PSPQ…SPAT), 1769–1782 (QSVT…SMGT), and 1824–1844 (VNNS…NQGL). 2 stretches are compositionally biased toward basic and acidic residues: residues 1863–1872 (SEEKRPKLPE) and 1882–1892 (LASEEQPHLEE).

This sequence belongs to the EAF1 family. Component of the NuA4 histone acetyltransferase complex. Interacts with ARP4 and SWC4, and (via HSA domain) with TAF14 and TAF14B. Expressed in leaves.

Its subcellular location is the nucleus. Its function is as follows. Component of the NuA4 histone acetyltransferase complex which is involved in transcriptional activation of selected genes principally by acetylation of nucleosomal histone H4 and H2A. In Arabidopsis thaliana (Mouse-ear cress), this protein is Chromatin modification-related protein EAF1 B (EAF1B).